Reading from the N-terminus, the 474-residue chain is MANAVGKITQVIGAVVDVQFADHLPEILNALETNNNGNRLVLEVAQHLGENTVRAIAMDATEGLVRGQTVTDTDGPISIPVGNATLGRIMNVVGEPIDEKGPVATDETRSIHQEAPAFAEQSTSSEVLETGIKVIDLLAPYAKGGKIGLFGGAGVGKTVLIMELINNIAKVHSGFSVFAGVGERTREGNDLYHEMIESSVIVPDNLTESKVALVYGQMNEPPGARMRVALTGLTLAEQFRDQSGTDVLFFVDNIFRFTQAGSEVSALLGRIPSAVGYQPTLATDMGAMQERITSTKAGSITSVQAVYVPADDLTDPAPATSFAHLDATTVLSRAISELGIYPAVDPLDSTSRLMDPQVLGEEHYNVARDVQGILQRYKSLQDIIAILGMDELSEEDKLTVARARKIQRFLSQPFDVAKVFTGSDGKQVPLAETIESFKAVVAGEYDHLPEGAFYMVGGIEEVKAKAEQMAADAA.

151-158 (GGAGVGKT) is a binding site for ATP.

The protein belongs to the ATPase alpha/beta chains family. F-type ATPases have 2 components, CF(1) - the catalytic core - and CF(0) - the membrane proton channel. CF(1) has five subunits: alpha(3), beta(3), gamma(1), delta(1), epsilon(1). CF(0) has four main subunits: a(1), b(1), b'(1) and c(9-12).

It localises to the cell inner membrane. It carries out the reaction ATP + H2O + 4 H(+)(in) = ADP + phosphate + 5 H(+)(out). Functionally, produces ATP from ADP in the presence of a proton gradient across the membrane. The catalytic sites are hosted primarily by the beta subunits. In Roseobacter denitrificans (strain ATCC 33942 / OCh 114) (Erythrobacter sp. (strain OCh 114)), this protein is ATP synthase subunit beta.